Here is a 280-residue protein sequence, read N- to C-terminus: Lysosome-associated membrane glycoprotein 5 (280 aa).

A signal peptide spans 1–29 (MDLRVRTLLGGDRLRILLMFFHVMVQTVA). Over 30 to 235 (EQEVENLSGL…PVDEQEQLEE (206 aa)) the chain is Extracellular. N-linked (GlcNAc...) asparagine glycans are attached at residues N35, N53, N102, and N127. A helical transmembrane segment spans residues 236-256 (TLPLILGLILGLVIVITLVIY). Over 257 to 280 (HIHHKMTANQVQIPRDRSQYKHMG) the chain is Cytoplasmic.

This sequence belongs to the LAMP family. Glycosylated. In brain, strongly expressed in the globus pallidus/ventral pallidum complex, the substantia nigra pars reticulata and the entopeduncular nucleus (at protein level). Expressed in the external plexiform layer of the olfactory bulb (at protein level). May be weakly expressed in neocortex and striatum (at protein level). Highly expressed in brain; not detected in other tissues tested. Detected in the cingulate cortex, cortical plate and caudate putamen. In neocortex, specifically expressed in neurons of layers II/III and V.

It localises to the cytoplasmic vesicle membrane. It is found in the cell membrane. The protein resides in the cell projection. Its subcellular location is the dendrite. The protein localises to the cytoplasmic vesicle. It localises to the secretory vesicle. It is found in the synaptic vesicle membrane. The protein resides in the growth cone membrane. Its subcellular location is the early endosome membrane. The protein localises to the recycling endosome. It localises to the endoplasmic reticulum-Golgi intermediate compartment membrane. It is found in the endosome membrane. In terms of biological role, plays a role in short-term synaptic plasticity in a subset of GABAergic neurons in the brain. The chain is Lysosome-associated membrane glycoprotein 5 (Lamp5) from Mus musculus (Mouse).